We begin with the raw amino-acid sequence, 168 residues long: MKLTSKGRYAVTAMLDVALHSQQNPVPLADISERQGISLSYLEQLFSKLRKAGLVASVRGPGGGYRLGADAHSIAIGTVIAAVDESVDATKCQGKGDCQGGTRCLTHTLWRDLSSRISDFLNNITLGELMTDNEVLEISDRQDIGLAVTHGLSNKNTTAAPIGVNVRS.

The 130-residue stretch at K2–T131 folds into the HTH rrf2-type domain. Positions L28–K51 form a DNA-binding region, H-T-H motif. [2Fe-2S] cluster is bound by residues C92, C98, and C104.

The cofactor is [2Fe-2S] cluster.

Its function is as follows. Regulates the transcription of several operons and genes involved in the biogenesis of Fe-S clusters and Fe-S-containing proteins. This chain is HTH-type transcriptional regulator IscR, found in Vibrio parahaemolyticus serotype O3:K6 (strain RIMD 2210633).